Consider the following 1010-residue polypeptide: Lethal(2) giant larvae protein homolog SRO77 (1010 aa).

14 WD repeats span residues Thr47 to Thr80, Ile87 to Phe122, Ile127 to Ile163, Ser182 to Phe215, Val240 to Arg275, Ala299 to Phe364, Leu372 to Ile407, Val431 to Asn504, Lys518 to Ile595, Val602 to Asn637, Val649 to Lys700, Gly709 to Leu763, Ile768 to Arg815, and Ser829 to Asn852. Residues Ser932–Asn958 form a disordered region.

This sequence belongs to the WD repeat L(2)GL family. Interacts with SEC9.

Its function is as follows. Acts as an allosteric regulator of polarized exocytosis by promoting the targeted fusion of vesicles with the plasma membrane. Involved in maintenance of ion homeostasis in cells exposed to NaCl stress. May be involved in the targeting of the myosin proteins to their intrinsic pathways. Multicopy suppressor of RHO3. May also participate in the maintenance of cell polarity and bud growth. This is Lethal(2) giant larvae protein homolog SRO77 (SRO77) from Saccharomyces cerevisiae (strain ATCC 204508 / S288c) (Baker's yeast).